We begin with the raw amino-acid sequence, 365 residues long: MIYNFGAGPSVLPKEVLKKVQEELLDFEKSGMSVMEISHRSKSFQEVIDEAQSNLRDLMSIPQNYKILFLQGGASTQFSMIPMNLALGKKAYYAISGAFGKKAYDEAVKLSQTLDFEAISLGSTQSEHYNHLLKIDKSKVDEKMAAYLHITTNNTIEGTTIFPENLPEVNSVPLIADMSSNILAVDYDVSKFGLIYAGAQKNLGIAGLTIVIIREDLLNQKESLSSMMDYRILAQNGSMYNTPPTFAIYLAGLVFKWVKEQGGVKKLEAINRQKARMLYDLIDQSDFYQSPVLNEAERSICNVVFTSPSKELDALFVQKAEEKGFKSIKGHRSVGGMRASIYNAFPIEGVLELVKFMKEFEEENK.

Residue Arg-40 coordinates L-glutamate. Pyridoxal 5'-phosphate-binding positions include 74-75 (AS), Phe-99, Thr-155, Asp-177, and Gln-200. Lys-201 is subject to N6-(pyridoxal phosphate)lysine. 241–242 (NT) is a pyridoxal 5'-phosphate binding site.

The protein belongs to the class-V pyridoxal-phosphate-dependent aminotransferase family. SerC subfamily. In terms of assembly, homodimer. Pyridoxal 5'-phosphate serves as cofactor.

It is found in the cytoplasm. It catalyses the reaction O-phospho-L-serine + 2-oxoglutarate = 3-phosphooxypyruvate + L-glutamate. The catalysed reaction is 4-(phosphooxy)-L-threonine + 2-oxoglutarate = (R)-3-hydroxy-2-oxo-4-phosphooxybutanoate + L-glutamate. Its pathway is amino-acid biosynthesis; L-serine biosynthesis; L-serine from 3-phospho-D-glycerate: step 2/3. Catalyzes the reversible conversion of 3-phosphohydroxypyruvate to phosphoserine and of 3-hydroxy-2-oxo-4-phosphonooxybutanoate to phosphohydroxythreonine. This chain is Phosphoserine aminotransferase, found in Lactococcus lactis subsp. cremoris (strain SK11).